The primary structure comprises 340 residues: MAEPIDAVVLSLDEVHALALRVLTHHGLSDAHARAIANVITQGQRDECHSHGVYRLLVCVRSLRKGKVDPQAVPTLRRLSSSIVAVDAHRGFSLLSFETGLPVLVEMTKQHGIAAMVINRCYHFSALWPEVEAIAAEGLVGIAMNPSHSWVAPEGGKEPVFGTNPIAFAWPRPGGMPFVFDFATSAIARGDIELHAKQGKPIPPEWAIDAQGRPTTDPQAALQGAMRTFGGHKGSALAAMVELLGGALIGDLTSRESMDFDEGVGATPCHGELAIAFDPKVFLGDDLDAGLARGERMFDSIVAQGARLPSQRRFDARARSIANGVRIPRALYDEIVALLD.

Ser50 (charge relay system) is an active-site residue. The active-site Proton donor is His51. Arg55 is a substrate binding site. 123–127 (HFSAL) is an NADP(+) binding site. Thr163 serves as a coordination point for substrate. 181-183 (DFA) provides a ligand contact to NADP(+). 189 to 190 (RG) contributes to the substrate binding site. Residue Asp191 is the Charge relay system of the active site. NADP(+) is bound by residues 232-233 (HK) and 307-313 (RLPSQRR).

The protein belongs to the LDH2/MDH2 oxidoreductase family. As to quaternary structure, homodimer.

The enzyme catalyses L-proline + NAD(+) = 1-pyrroline-2-carboxylate + NADH + H(+). It carries out the reaction L-proline + NADP(+) = 1-pyrroline-2-carboxylate + NADPH + H(+). Catalyzes the reduction of Delta(1)-pyrroline-2-carboxylate (Pyr2C) to L-proline, using NADPH as the electron donor. May be involved in a degradation pathway that converts trans-3-hydroxy-L-proline (t3LHyp) to L-proline. This is Delta(1)-pyrroline-2-carboxylate reductase 2 from Burkholderia multivorans (strain ATCC 17616 / 249).